The following is a 171-amino-acid chain: Zinc finger A20 and AN1 domain-containing stress-associated protein 8 (171 aa).

Residues Pro11–Glu45 form an A20-type zinc finger. Zn(2+) contacts are provided by Cys17, Cys21, Cys33, Cys36, Cys112, Cys115, Cys126, Cys128, Cys133, His136, His142, and Cys144. The AN1-type zinc-finger motif lies at Arg106–Ala152.

May be involved in environmental stress response. This is Zinc finger A20 and AN1 domain-containing stress-associated protein 8 (SAP8) from Oryza sativa subsp. indica (Rice).